The chain runs to 279 residues: Replication protein A 32 kDa subunit A (279 aa).

The interval Met1–Thr33 is disordered. Low complexity predominate over residues Met19–Ser32. The OB DNA-binding region spans Val73 to Ile148.

The protein belongs to the replication factor A protein 2 family. In terms of assembly, heterotrimer of RPA1, RPA2 and RPA3 (canonical replication protein A complex). Interacts with ROS1. Binds to ASE1/At3g02920, PDX2, At5g62350, RPA1A/At2g06510, ARF1/At1g10630, At4g18590 and At3g52630. Post-translationally, phosphorylated in a cell-cycle-dependent manner (from the S phase until mitosis). In response to DNA damage, recruited to DNA-repair nuclear foci, as a hypophosphorylated form. Strongly expressed in shoot and root meristems. Present in seedlings, roots, leaves, siliques and flowers.

It is found in the nucleus. Component of the replication protein A complex (RPA) required for DNA recombination, repair and replication. The activity of RPA is mediated by single-stranded DNA binding and protein interactions. Required fo cell division in meristems. Involved in the maintenance of transcriptional epigenetic gene silencing (TGS) at specific loci (including some transposons) by regulating histone H3 acetylation, 'Lys-4' and 'Lys-9' methylation. The sequence is that of Replication protein A 32 kDa subunit A (RPA2A) from Arabidopsis thaliana (Mouse-ear cress).